The following is a 360-amino-acid chain: MDSRNCKVNAPLLSQRYRRMVTKDGHSTLQMDGAQRGLVYLRDAWGILMDMRWRWMMLVFSASFVVHWLVFAVLWYAVAEMNGDLEIDHDVPPENHTICVKHITSFTAAFSFSLETQLTIGYGTMFPSGDCPSAIALLAIQMLLGLMLEAFITGAFVAKIARPKNRAFSIRFTDLAVVAHKDGKPNLIFQVANTRPSPLTSVRVSAVLYQERENGELYQTSVDFHLDGISSEECPFFIFPLTYYHTITPSSPLATLLQHETPSHFELVVFLSAMQEGTGEICQRRTSYLPSEIMLHHRFAALMTRGSKGEYQVKMENFDKTVPEHPTPVVSKSPHRTDLDIHINGQSIDNFQIAETGLTE.

Residues 1–50 (MDSRNCKVNAPLLSQRYRRMVTKDGHSTLQMDGAQRGLVYLRDAWGILMD) are Cytoplasmic-facing. Residues 51–77 (MRWRWMMLVFSASFVVHWLVFAVLWYA) traverse the membrane as a helical segment. Over 78-105 (VAEMNGDLEIDHDVPPENHTICVKHITS) the chain is Extracellular. Residues 106–122 (FTAAFSFSLETQLTIGY) constitute an intramembrane region (helical; Pore-forming). Residues 119–124 (TIGYGT) carry the Selectivity filter motif. The Extracellular portion of the chain corresponds to 123–131 (GTMFPSGDC). A helical transmembrane segment spans residues 132 to 157 (PSAIALLAIQMLLGLMLEAFITGAFV). At 158–360 (AKIARPKNRA…FQIAETGLTE (203 aa)) the chain is on the cytoplasmic side. At S201 the chain carries Phosphoserine; by PKC. S287 bears the Phosphoserine; by PKA mark.

Belongs to the inward rectifier-type potassium channel (TC 1.A.2.1) family. KCNJ13 subfamily. In terms of assembly, homotetramer. Interacts with RAB28; the interaction may facilitate cone outer segments phagocytosis. In terms of processing, phosphorylation at Ser-201 by PKC strongly inhibits ionic currents, while phosphorylation at Ser-287 by PKA increases them.

The protein resides in the membrane. It is found in the cell membrane. The catalysed reaction is K(+)(in) = K(+)(out). With respect to regulation, inhibited by Ba(2+) and Cs(+), although sensitivity to those inhibitors is much lower than in other Kir channels. In terms of biological role, inward rectifier potassium channels are characterized by a greater tendency to allow potassium to flow into the cell rather than out of it. Their voltage dependence is regulated by the concentration of extracellular potassium; as external potassium is raised, the voltage range of the channel opening shifts to more positive voltages. The inward rectification is mainly due to the blockage of outward current by internal magnesium. KCNJ13 has a very low single channel conductance, low sensitivity to block by external barium and cesium, and no dependence of its inward rectification properties on the internal blocking particle magnesium. The sequence is that of Inward rectifier potassium channel 13 (Kcnj13) from Rattus norvegicus (Rat).